A 569-amino-acid chain; its full sequence is Acetate/butyrate--CoA ligase AAE7, peroxisomal (569 aa).

Positions 567 to 569 match the Microbody targeting signal motif; it reads SRL.

Belongs to the ATP-dependent AMP-binding enzyme family. In terms of tissue distribution, expressed in roots, leaves, stems, flowers and developing seeds.

It is found in the peroxisome. It carries out the reaction acetate + ATP + CoA = acetyl-CoA + AMP + diphosphate. The catalysed reaction is a medium-chain fatty acid + ATP + CoA = a medium-chain fatty acyl-CoA + AMP + diphosphate. Peroxisomal acetate/butyrate--CoA ligase that is probably involved in the activation of exogenous acetate for entry into the glyoxylate cycle. May play a role to prevent carbon loss from peroxisomes during lipid mobilization. In vitro, is active with both acetate and butyrate. The protein is Acetate/butyrate--CoA ligase AAE7, peroxisomal (AAE7) of Arabidopsis thaliana (Mouse-ear cress).